A 398-amino-acid chain; its full sequence is UPF0496 protein At5g66660 (398 aa).

2 helical membrane passes run Val-240–Ser-260 and Pro-263–Phe-283.

This sequence belongs to the UPF0496 family.

It is found in the membrane. The chain is UPF0496 protein At5g66660 from Arabidopsis thaliana (Mouse-ear cress).